Here is a 181-residue protein sequence, read N- to C-terminus: MNNNILVFDQVSNLNEPPNILLLSEEDHRVAKNAEIFIDKMITNLKFLSNSNSCDSSKKRKMIEQKTKCSNPRKNCGAKKLKTSPLPQPMTNLSHNHMFSIDEKPKRGRPPKPKPLCCQICLTNNTPYWRWSVIENNKIRVCNRCGQKIFKLEKSINEQLLFRIEIINLLNKIDDEKPIEK.

The GATA-type zinc-finger motif lies at cysteine 118–cysteine 145.

This is GATA zinc finger domain-containing protein 22 (gtaV) from Dictyostelium discoideum (Social amoeba).